The chain runs to 263 residues: Proliferating cell nuclear antigen (263 aa).

A DNA-binding region spans residues 61-80 (RCDRNLSMGMNLNNMAKMLR).

This sequence belongs to the PCNA family. As to quaternary structure, homotrimer. Interacts with FEN1A. Interacts with POLL. Interacts with RAD/GEN1. Interacts with DJA7 and DJA8. In terms of tissue distribution, expressed in proliferating tissues. Expressed in roots and root apex. Expressed at low levels in young leaves. Not detected in mature leaves. Highly expressed in shoot apical meristem (SAM). Expressed in flag leaves and panicles.

The protein resides in the nucleus. This protein is an auxiliary protein of DNA polymerase delta and is involved in the control of eukaryotic DNA replication by increasing the polymerase's processibility during elongation of the leading strand. The chain is Proliferating cell nuclear antigen from Oryza sativa subsp. japonica (Rice).